Consider the following 396-residue polypeptide: Tyrosine--tRNA ligase (396 aa).

Positions 39 to 48 (PTAPDLHLGH) match the 'HIGH' region motif. The 'KMSKS' region motif lies at 223-227 (KMSKS). Lys-226 contributes to the ATP binding site. The region spanning 334–395 (LPVPQLLKQA…GKRKFARVTV (62 aa)) is the S4 RNA-binding domain.

The protein belongs to the class-I aminoacyl-tRNA synthetase family. TyrS type 2 subfamily. In terms of assembly, homodimer.

It is found in the cytoplasm. It catalyses the reaction tRNA(Tyr) + L-tyrosine + ATP = L-tyrosyl-tRNA(Tyr) + AMP + diphosphate + H(+). In terms of biological role, catalyzes the attachment of tyrosine to tRNA(Tyr) in a two-step reaction: tyrosine is first activated by ATP to form Tyr-AMP and then transferred to the acceptor end of tRNA(Tyr). The protein is Tyrosine--tRNA ligase of Thiobacillus denitrificans (strain ATCC 25259 / T1).